Consider the following 614-residue polypeptide: Nuclear receptor subfamily 1 group D member 1 (614 aa).

Residues 1–48 (MTTLDSNNNTGGVITYIGSSGSSPNRTSPESLYSDSSNGSFQSLTQGC) are compositionally biased toward polar residues. The segment at 1 to 70 (MTTLDSNNNT…TQDPARSFGS (70 aa)) is required for phosphorylation by CSNK1E and cytoplasmic localization. The disordered stretch occupies residues 1–120 (MTTLDSNNNT…GNRVSPSKST (120 aa)). A modulating region spans residues 1 to 129 (MTTLDSNNNT…TSNITKLNGM (129 aa)). The segment at 49–285 (PTYFPPSPTG…PPRSPSPEPT (237 aa)) is crucial for activation of GJA1. A phosphoserine; by GSK3-beta mark is found at Ser55 and Ser59. A compositionally biased stretch (low complexity) spans 69-103 (GSIPPSLGDDGSPSSSSSSSSSSSSSFYNGSPPGG). The nuclear receptor DNA-binding region spans 130 to 206 (VLLCKVCGDV…VGMSRDAVRF (77 aa)). 2 consecutive NR C4-type zinc fingers follow at residues 133–153 (CKVC…CEGC) and 170–194 (CLKN…FKKC). An N6-acetyllysine; by KAT5 mark is found at Lys192 and Lys193. The tract at residues 233–286 (SSQCPLETPPTQHPTPGPMGPSPPPAPAPSPLVGFSQFPQQLTPPRSPSPEPTV) is disordered. Positions 239 to 262 (ETPPTQHPTPGPMGPSPPPAPAPS) are enriched in pro residues. At Thr275 the chain carries Phosphothreonine; by CDK1. The NR LBD domain maps to 285-614 (TVEDVISQVA…KLLSFRVDAQ (330 aa)). Cys418 is a heme binding site. The residue at position 591 (Lys591) is an N6-acetyllysine. His602 is a binding site for heme.

Belongs to the nuclear hormone receptor family. NR1 subfamily. As to quaternary structure, binds DNA as a monomer or a homodimer. Interacts with C1D, NR2E3, SP1 and ZNHIT1. Interacts with OPHN1 (via C-terminus). Interacts with PER2; the interaction associates PER2 to BMAL1 promoter region. Interacts with CRY1. Interacts with CCAR2. Interacts with SIAH2. Interacts with FBXW7 and CDK1. Interacts with HUWE1. Interacts with NR0B2. Interacts with NFIL3. Interacts (via domain NR LBD) with HSP90AA1 and HSP90AB1. In terms of processing, ubiquitinated, leading to its proteasomal degradation. Ubiquitinated by the SCF(FBXW7) complex when phosphorylated by CDK1 leading to its proteasomal degradation. Ubiquitinated by SIAH2; leading to its proteasomal degradation. Rapidly ubiquitinated in response to inflammatory triggers and sumoylation is a prerequisite to its ubiquitination. Sumoylated by UBE2I, desumoylated by SENP1, and sumoylation is a prerequisite to its ubiquitination. Post-translationally, phosphorylated by CSNK1E; phosphorylation enhances its cytoplasmic localization. In terms of processing, undergoes lysosome-mediated degradation in a time-dependent manner in the liver. As to expression, expressed in all tissues and cell lines examined. Expressed at high levels in some squamous carcinoma cell lines.

It localises to the nucleus. The protein resides in the cytoplasm. The protein localises to the cell projection. It is found in the dendrite. Its subcellular location is the dendritic spine. Its function is as follows. Transcriptional repressor which coordinates circadian rhythm and metabolic pathways in a heme-dependent manner. Integral component of the complex transcription machinery that governs circadian rhythmicity and forms a critical negative limb of the circadian clock by directly repressing the expression of core clock components BMAL1, CLOCK and CRY1. Also regulates genes involved in metabolic functions, including lipid and bile acid metabolism, adipogenesis, gluconeogenesis and the macrophage inflammatory response. Acts as a receptor for heme which stimulates its interaction with the NCOR1/HDAC3 corepressor complex, enhancing transcriptional repression. Recognizes two classes of DNA response elements within the promoter of its target genes and can bind to DNA as either monomers or homodimers, depending on the nature of the response element. Binds as a monomer to a response element composed of the consensus half-site motif 5'-[A/G]GGTCA-3' preceded by an A/T-rich 5' sequence (RevRE), or as a homodimer to a direct repeat of the core motif spaced by two nucleotides (RevDR-2). Acts as a potent competitive repressor of ROR alpha (RORA) function and regulates the levels of its ligand heme by repressing the expression of PPARGC1A, a potent inducer of heme synthesis. Regulates lipid metabolism by repressing the expression of APOC3 and by influencing the activity of sterol response element binding proteins (SREBPs); represses INSIG2 which interferes with the proteolytic activation of SREBPs which in turn govern the rhythmic expression of enzymes with key functions in sterol and fatty acid synthesis. Regulates gluconeogenesis via repression of G6PC1 and PEPCK and adipocyte differentiation via repression of PPARG. Regulates glucagon release in pancreatic alpha-cells via the AMPK-NAMPT-SIRT1 pathway and the proliferation, glucose-induced insulin secretion and expression of key lipogenic genes in pancreatic-beta cells. Positively regulates bile acid synthesis by increasing hepatic expression of CYP7A1 via repression of NR0B2 and NFIL3 which are negative regulators of CYP7A1. Modulates skeletal muscle oxidative capacity by regulating mitochondrial biogenesis and autophagy; controls mitochondrial biogenesis and respiration by interfering with the STK11-PRKAA1/2-SIRT1-PPARGC1A signaling pathway. Represses the expression of SERPINE1/PAI1, an important modulator of cardiovascular disease and the expression of inflammatory cytokines and chemokines in macrophages. Represses gene expression at a distance in macrophages by inhibiting the transcription of enhancer-derived RNAs (eRNAs). Plays a role in the circadian regulation of body temperature and negatively regulates thermogenic transcriptional programs in brown adipose tissue (BAT); imposes a circadian oscillation in BAT activity, increasing body temperature when awake and depressing thermogenesis during sleep. In concert with NR2E3, regulates transcriptional networks critical for photoreceptor development and function. In addition to its activity as a repressor, can also act as a transcriptional activator. In the ovarian granulosa cells acts as a transcriptional activator of STAR which plays a role in steroid biosynthesis. In collaboration with SP1, activates GJA1 transcription in a heme-independent manner. Represses the transcription of CYP2B10, CYP4A10 and CYP4A14. Represses the transcription of CES2. Represses and regulates the circadian expression of TSHB in a NCOR1-dependent manner. Negatively regulates the protein stability of NR3C1 and influences the time-dependent subcellular distribution of NR3C1, thereby affecting its transcriptional regulatory activity. Plays a critical role in the circadian control of neutrophilic inflammation in the lung; under resting, non-stress conditions, acts as a rhythmic repressor to limit inflammatory activity whereas in the presence of inflammatory triggers undergoes ubiquitin-mediated degradation thereby relieving inhibition of the inflammatory response. Plays a key role in the circadian regulation of microglial activation and neuroinflammation; suppresses microglial activation through the NF-kappaB pathway in the central nervous system. Plays a role in the regulation of the diurnal rhythms of lipid and protein metabolism in the skeletal muscle via transcriptional repression of genes controlling lipid and amino acid metabolism in the muscle. The polypeptide is Nuclear receptor subfamily 1 group D member 1 (NR1D1) (Ovis aries (Sheep)).